A 193-amino-acid polypeptide reads, in one-letter code: Iron-sulfur flavoprotein MJ1083 (193 aa).

[4Fe-4S] cluster contacts are provided by Cys47, Cys50, Cys53, and Cys59.

It belongs to the SsuE family. Isf subfamily. In terms of assembly, homodimer. The cofactor is FMN. [4Fe-4S] cluster is required as a cofactor.

Functionally, redox-active protein probably involved in electron transport. The chain is Iron-sulfur flavoprotein MJ1083 from Methanocaldococcus jannaschii (strain ATCC 43067 / DSM 2661 / JAL-1 / JCM 10045 / NBRC 100440) (Methanococcus jannaschii).